A 253-amino-acid polypeptide reads, in one-letter code: uncharacterized protein (253 aa).

It belongs to the methyltransferase superfamily.

This is an uncharacterized protein from Mycobacterium avium (strain 104).